Consider the following 146-residue polypeptide: Large ribosomal subunit protein uL15 (146 aa).

The interval 1–58 is disordered; that stretch reads MNLSELRPAPGARKKPTRKGQGIGSGLGKTAGKGHKGQNARSGGGVRPGFEGGQMPLQ. 2 stretches are compositionally biased toward gly residues: residues 21-31 and 42-52; these read QGIGSGLGKTA and SGGGVRPGFEG.

It belongs to the universal ribosomal protein uL15 family. Part of the 50S ribosomal subunit.

Binds to the 23S rRNA. In Desulforamulus reducens (strain ATCC BAA-1160 / DSM 100696 / MI-1) (Desulfotomaculum reducens), this protein is Large ribosomal subunit protein uL15.